Reading from the N-terminus, the 103-residue chain is Large ribosomal subunit protein bL21 (103 aa).

It belongs to the bacterial ribosomal protein bL21 family. Part of the 50S ribosomal subunit. Contacts protein L20.

Functionally, this protein binds to 23S rRNA in the presence of protein L20. This is Large ribosomal subunit protein bL21 from Mycolicibacterium smegmatis (strain ATCC 700084 / mc(2)155) (Mycobacterium smegmatis).